The primary structure comprises 787 residues: Lon protease (787 aa).

Residues 12 to 210 (LPLIPLRGLA…LIYSILLEEI (199 aa)) form the Lon N-terminal domain. Residue 362 to 369 (GPPGTGKT) coordinates ATP. In terms of domain architecture, Lon proteolytic spans 599-780 (NPQIGLVNGL…DEVLEQALLK (182 aa)). Active-site residues include S686 and K729.

The protein belongs to the peptidase S16 family. Homohexamer. Organized in a ring with a central cavity.

It is found in the cytoplasm. It catalyses the reaction Hydrolysis of proteins in presence of ATP.. In terms of biological role, ATP-dependent serine protease that mediates the selective degradation of mutant and abnormal proteins as well as certain short-lived regulatory proteins. Required for cellular homeostasis and for survival from DNA damage and developmental changes induced by stress. Degrades polypeptides processively to yield small peptide fragments that are 5 to 10 amino acids long. Binds to DNA in a double-stranded, site-specific manner. This chain is Lon protease, found in Clostridioides difficile (strain 630) (Peptoclostridium difficile).